A 218-amino-acid polypeptide reads, in one-letter code: Adenylate kinase (218 aa).

14 to 19 is an ATP binding site; sequence GAGKGT. The tract at residues 34–63 is NMP; sequence STGDMFRAAIKAGTELGKQAKALMDEGKLV. Residues Thr-35, Arg-40, 61–63, 89–92, and Gln-96 contribute to the AMP site; these read KLV and GFPR. The interval 126 to 163 is LID; that stretch reads GRRVHQASGRSYHIVYNPPKVEGKDDVTGEDLIIRADD. Residues Arg-127 and 136-137 contribute to the ATP site; that span reads SY. 2 residues coordinate AMP: Arg-160 and Arg-171. ATP is bound at residue Lys-204.

The protein belongs to the adenylate kinase family. Monomer.

The protein localises to the cytoplasm. The enzyme catalyses AMP + ATP = 2 ADP. Its pathway is purine metabolism; AMP biosynthesis via salvage pathway; AMP from ADP: step 1/1. In terms of biological role, catalyzes the reversible transfer of the terminal phosphate group between ATP and AMP. Plays an important role in cellular energy homeostasis and in adenine nucleotide metabolism. In Mannheimia succiniciproducens (strain KCTC 0769BP / MBEL55E), this protein is Adenylate kinase.